Reading from the N-terminus, the 239-residue chain is Large ribosomal subunit protein uL2 (239 aa).

The disordered stretch occupies residues 203–239; that stretch reads PFGGKEHHPGKPTTTSRRAPPGRKVGHIAARRTGRRK. The span at 222–239 shows a compositional bias: basic residues; it reads PPGRKVGHIAARRTGRRK.

Belongs to the universal ribosomal protein uL2 family. Part of the 50S ribosomal subunit. Forms a bridge to the 30S subunit in the 70S ribosome.

One of the primary rRNA binding proteins. Required for association of the 30S and 50S subunits to form the 70S ribosome, for tRNA binding and peptide bond formation. It has been suggested to have peptidyltransferase activity; this is somewhat controversial. Makes several contacts with the 16S rRNA in the 70S ribosome. The chain is Large ribosomal subunit protein uL2 from Pyrococcus abyssi (strain GE5 / Orsay).